The chain runs to 119 residues: Large ribosomal subunit protein uL22c (119 aa).

It belongs to the universal ribosomal protein uL22 family. As to quaternary structure, part of the 50S ribosomal subunit.

It is found in the plastid. The protein localises to the chloroplast. Its function is as follows. This protein binds specifically to 23S rRNA. In terms of biological role, the globular domain of the protein is located near the polypeptide exit tunnel on the outside of the subunit, while an extended beta-hairpin is found that lines the wall of the exit tunnel in the center of the 70S ribosome. This is Large ribosomal subunit protein uL22c (rpl22) from Angiopteris evecta (Mule's foot fern).